The chain runs to 438 residues: Trigger factor (438 aa).

The region spanning Asp-160 to Pro-245 is the PPIase FKBP-type domain.

It belongs to the FKBP-type PPIase family. Tig subfamily.

It localises to the cytoplasm. It catalyses the reaction [protein]-peptidylproline (omega=180) = [protein]-peptidylproline (omega=0). Involved in protein export. Acts as a chaperone by maintaining the newly synthesized protein in an open conformation. Functions as a peptidyl-prolyl cis-trans isomerase. The polypeptide is Trigger factor (Francisella tularensis subsp. mediasiatica (strain FSC147)).